The primary structure comprises 274 residues: 2,3,4,5-tetrahydropyridine-2,6-dicarboxylate N-succinyltransferase (274 aa).

Substrate is bound by residues Arg-104 and Asp-141.

The protein belongs to the transferase hexapeptide repeat family. In terms of assembly, homotrimer.

Its subcellular location is the cytoplasm. It catalyses the reaction (S)-2,3,4,5-tetrahydrodipicolinate + succinyl-CoA + H2O = (S)-2-succinylamino-6-oxoheptanedioate + CoA. It functions in the pathway amino-acid biosynthesis; L-lysine biosynthesis via DAP pathway; LL-2,6-diaminopimelate from (S)-tetrahydrodipicolinate (succinylase route): step 1/3. This chain is 2,3,4,5-tetrahydropyridine-2,6-dicarboxylate N-succinyltransferase, found in Shewanella loihica (strain ATCC BAA-1088 / PV-4).